Consider the following 271-residue polypeptide: Pyrroline-5-carboxylate reductase (271 aa).

The protein belongs to the pyrroline-5-carboxylate reductase family.

The protein localises to the cytoplasm. It carries out the reaction L-proline + NADP(+) = (S)-1-pyrroline-5-carboxylate + NADPH + 2 H(+). The catalysed reaction is L-proline + NAD(+) = (S)-1-pyrroline-5-carboxylate + NADH + 2 H(+). It functions in the pathway amino-acid biosynthesis; L-proline biosynthesis; L-proline from L-glutamate 5-semialdehyde: step 1/1. Functionally, catalyzes the reduction of 1-pyrroline-5-carboxylate (PCA) to L-proline. This is Pyrroline-5-carboxylate reductase from Staphylococcus epidermidis (strain ATCC 35984 / DSM 28319 / BCRC 17069 / CCUG 31568 / BM 3577 / RP62A).